A 103-amino-acid chain; its full sequence is Small ribosomal subunit protein uS10 (103 aa).

Belongs to the universal ribosomal protein uS10 family. As to quaternary structure, part of the 30S ribosomal subunit.

Involved in the binding of tRNA to the ribosomes. The protein is Small ribosomal subunit protein uS10 of Chlorobium phaeobacteroides (strain DSM 266 / SMG 266 / 2430).